A 464-amino-acid polypeptide reads, in one-letter code: Anthranilate synthase component 1 (464 aa).

Residues S41 and 236–238 (PYM) contribute to the L-tryptophan site. 271 to 272 (GT) provides a ligand contact to chorismate. E298 provides a ligand contact to Mg(2+). Residues Y386, R406, 420–422 (GAG), and G422 contribute to the chorismate site. Position 435 (E435) interacts with Mg(2+).

The protein belongs to the anthranilate synthase component I family. Heterotetramer consisting of two non-identical subunits: a beta subunit (TrpG) and a large alpha subunit (TrpE). Mg(2+) serves as cofactor.

It carries out the reaction chorismate + L-glutamine = anthranilate + pyruvate + L-glutamate + H(+). It participates in amino-acid biosynthesis; L-tryptophan biosynthesis; L-tryptophan from chorismate: step 1/5. With respect to regulation, feedback inhibited by tryptophan. In terms of biological role, part of a heterotetrameric complex that catalyzes the two-step biosynthesis of anthranilate, an intermediate in the biosynthesis of L-tryptophan. In the first step, the glutamine-binding beta subunit (TrpG) of anthranilate synthase (AS) provides the glutamine amidotransferase activity which generates ammonia as a substrate that, along with chorismate, is used in the second step, catalyzed by the large alpha subunit of AS (TrpE) to produce anthranilate. In the absence of TrpG, TrpE can synthesize anthranilate directly from chorismate and high concentrations of ammonia. This Methanothermobacter thermautotrophicus (strain ATCC 29096 / DSM 1053 / JCM 10044 / NBRC 100330 / Delta H) (Methanobacterium thermoautotrophicum) protein is Anthranilate synthase component 1 (trpE).